Reading from the N-terminus, the 57-residue chain is Large ribosomal subunit protein eL20 (57 aa).

This sequence belongs to the eukaryotic ribosomal protein eL20 family. In terms of assembly, part of the 50S ribosomal subunit. Binds 23S rRNA.

In Natronomonas pharaonis (strain ATCC 35678 / DSM 2160 / CIP 103997 / JCM 8858 / NBRC 14720 / NCIMB 2260 / Gabara) (Halobacterium pharaonis), this protein is Large ribosomal subunit protein eL20.